The following is a 217-amino-acid chain: 3,4-dihydroxy-2-butanone 4-phosphate synthase (217 aa).

D-ribulose 5-phosphate is bound by residues Arg-37 to Glu-38, Asp-42, Arg-150 to Thr-154, and Glu-174. Residue Glu-38 coordinates Mg(2+). A Mg(2+)-binding site is contributed by His-153.

It belongs to the DHBP synthase family. In terms of assembly, homodimer. Mg(2+) is required as a cofactor. It depends on Mn(2+) as a cofactor.

It carries out the reaction D-ribulose 5-phosphate = (2S)-2-hydroxy-3-oxobutyl phosphate + formate + H(+). Its pathway is cofactor biosynthesis; riboflavin biosynthesis; 2-hydroxy-3-oxobutyl phosphate from D-ribulose 5-phosphate: step 1/1. Functionally, catalyzes the conversion of D-ribulose 5-phosphate to formate and 3,4-dihydroxy-2-butanone 4-phosphate. This is 3,4-dihydroxy-2-butanone 4-phosphate synthase from Pectobacterium atrosepticum (strain SCRI 1043 / ATCC BAA-672) (Erwinia carotovora subsp. atroseptica).